The primary structure comprises 104 residues: MDSNKITFFTRFEQDILAGRKTITIRDKSESSFQPNQILAVYTNETDRFFANIKVLSVTPIHFEALSEAHAQQENMTLPELRQVIKEIYPQEDCFWVIAFELVD.

Residues 7-104 (TFFTRFEQDI…FWVIAFELVD (98 aa)) enclose the ASCH domain. K21 acts as the Proton acceptor in catalysis. Catalysis depends on T24, which acts as the Nucleophile. Residue E74 is the Proton donor of the active site.

Belongs to the N(4)-acetylcytidine amidohydrolase family.

The enzyme catalyses N(4)-acetylcytidine + H2O = cytidine + acetate + H(+). It carries out the reaction N(4)-acetyl-2'-deoxycytidine + H2O = 2'-deoxycytidine + acetate + H(+). The catalysed reaction is N(4)-acetylcytosine + H2O = cytosine + acetate + H(+). Its function is as follows. Catalyzes the hydrolysis of N(4)-acetylcytidine (ac4C). This Pasteurella multocida (strain Pm70) protein is N(4)-acetylcytidine amidohydrolase.